The chain runs to 432 residues: Adenylosuccinate synthetase (432 aa).

Residues 12-18 (GDEGKGK) and 40-42 (GHT) contribute to the GTP site. Aspartate 13 acts as the Proton acceptor in catalysis. Residues aspartate 13 and glycine 40 each coordinate Mg(2+). IMP is bound by residues 13-16 (DEGK), 38-41 (NAGH), threonine 130, arginine 144, glutamine 225, threonine 240, and arginine 304. Residue histidine 41 is the Proton donor of the active site. 300 to 306 (ATTGRRR) contacts substrate. Residues arginine 306, 332–334 (KLD), and 415–417 (SVG) contribute to the GTP site.

Belongs to the adenylosuccinate synthetase family. In terms of assembly, homodimer. It depends on Mg(2+) as a cofactor.

It localises to the cytoplasm. The enzyme catalyses IMP + L-aspartate + GTP = N(6)-(1,2-dicarboxyethyl)-AMP + GDP + phosphate + 2 H(+). Its pathway is purine metabolism; AMP biosynthesis via de novo pathway; AMP from IMP: step 1/2. Functionally, plays an important role in the de novo pathway of purine nucleotide biosynthesis. Catalyzes the first committed step in the biosynthesis of AMP from IMP. The chain is Adenylosuccinate synthetase from Syntrophus aciditrophicus (strain SB).